A 483-amino-acid polypeptide reads, in one-letter code: E3 ubiquitin-protein ligase TRIM50 (483 aa).

The segment at 16–57 (CPICLEVFKEPLMLQCGHSYCKDCLDNLSQHLDSELCCPVCR) adopts an RING-type zinc-finger fold. A B box-type zinc finger spans residues 84-125 (IEPTVCVHHRNPLSLFCEKDQEFICGLCGLLGSHQHHRVTPV). Positions 89, 92, 111, and 117 each coordinate Zn(2+). 2 coiled-coil regions span residues 127–169 (TVYS…NESD) and 203–236 (GLVA…GNES). The B30.2/SPRY domain occupies 275–474 (DIKLTVWKRL…LPMVLPPPSG (200 aa)). Lys-372 bears the N6-acetyllysine mark.

This sequence belongs to the TRIM/RBCC family. Can form dimers and trimers. Interacts with several E2 ubiquitin-conjugating enzymes, including UBE2L6, UBE2E1, UBE2E3. No interaction with UBE2H. Interacts with BECN1. Interacts with SQSTM1. Interacts with NLRP3. Auto-ubiquitinated. In terms of processing, acetylated by EP300 and KAT2B. HDAC6 drives TRIM50 deacetylation. Acetylation antagonizes with TRIM50 ubiquitination. As to expression, expressed in the stomach.

It is found in the cytoplasm. The enzyme catalyses S-ubiquitinyl-[E2 ubiquitin-conjugating enzyme]-L-cysteine + [acceptor protein]-L-lysine = [E2 ubiquitin-conjugating enzyme]-L-cysteine + N(6)-ubiquitinyl-[acceptor protein]-L-lysine.. E3 ubiquitin-protein ligase that ubiquitinates Beclin-1/BECN1 in a 'Lys-63'-dependent manner enhancing its binding to ULK1. In turn, promotes starvation-induced autophagy activation. Also interacts with p62/SQSTM1 protein and thereby induces the formation and the autophagy clearance of aggresome-associated polyubiquitinated proteins through HDAC6 interaction. Also promotes NLRP3 inflammasome activation by directly inducing NLRP3 oligomerization independent of its E3 ligase function. The protein is E3 ubiquitin-protein ligase TRIM50 (Trim50) of Mus musculus (Mouse).